The primary structure comprises 313 residues: Olfactory receptor 1G1 (313 aa).

The Extracellular segment spans residues 1–25 (MEGKNLTSISEFFLLGFSEQLEEQK). An N-linked (GlcNAc...) asparagine glycan is attached at N5. A helical membrane pass occupies residues 26 to 49 (ALFGSFLFMYLVMVAGNLLIILVI). Residues 50–57 (ITDTQLHT) are Cytoplasmic-facing. The helical transmembrane segment at 58 to 79 (PMYFFLANLSLADACFVSTTVP) threads the bilayer. Topologically, residues 80-100 (KMLANIQIQSQAISYSGCLLQ) are extracellular. C97 and C189 are joined by a disulfide. The helical transmembrane segment at 101-120 (LYFFMLFVMLEAFLLAVMAY) threads the bilayer. Residues 121-140 (DHYVAICHPLHYILIMSPGL) are Cytoplasmic-facing. The chain crosses the membrane as a helical span at residues 141–158 (CVFLVSASWIMNALYSLL). Over 159–196 (HTLLMNSLSFCANHEIPHFFCDIDPLLSLSCADPFTNE) the chain is Extracellular. The helical transmembrane segment at 197–219 (LVIFITGGLTGLICVLCLIISYT) threads the bilayer. Residues 220 to 236 (NVFSTILKIPSAQGKRK) are Cytoplasmic-facing. The helical transmembrane segment at 237–259 (AFSTCSSHLSVVSLFXGTSFCVY) threads the bilayer. Residues 260–272 (FSPPSTRXAQKDT) lie on the Extracellular side of the membrane. The helical transmembrane segment at 273–292 (VASVMYTVVTPMLNPFIYSL) threads the bilayer. At 293 to 313 (RNQEIKSSLRKLIWVRKIHSP) the chain is on the cytoplasmic side.

The protein belongs to the G-protein coupled receptor 1 family.

Its subcellular location is the cell membrane. In terms of biological role, odorant receptor. This is Olfactory receptor 1G1 (OR1G1) from Pan troglodytes (Chimpanzee).